The chain runs to 115 residues: Large ribosomal subunit protein bL19 (115 aa).

This sequence belongs to the bacterial ribosomal protein bL19 family.

Functionally, this protein is located at the 30S-50S ribosomal subunit interface and may play a role in the structure and function of the aminoacyl-tRNA binding site. This chain is Large ribosomal subunit protein bL19, found in Streptococcus pyogenes serotype M49 (strain NZ131).